A 287-amino-acid chain; its full sequence is Lipoyl synthase (287 aa).

7 residues coordinate [4Fe-4S] cluster: Cys-38, Cys-43, Cys-49, Cys-64, Cys-68, Cys-71, and Ser-277. One can recognise a Radical SAM core domain in the interval Trp-50–Arg-266.

The protein belongs to the radical SAM superfamily. Lipoyl synthase family. [4Fe-4S] cluster is required as a cofactor.

It is found in the cytoplasm. It catalyses the reaction [[Fe-S] cluster scaffold protein carrying a second [4Fe-4S](2+) cluster] + N(6)-octanoyl-L-lysyl-[protein] + 2 oxidized [2Fe-2S]-[ferredoxin] + 2 S-adenosyl-L-methionine + 4 H(+) = [[Fe-S] cluster scaffold protein] + N(6)-[(R)-dihydrolipoyl]-L-lysyl-[protein] + 4 Fe(3+) + 2 hydrogen sulfide + 2 5'-deoxyadenosine + 2 L-methionine + 2 reduced [2Fe-2S]-[ferredoxin]. The protein operates within protein modification; protein lipoylation via endogenous pathway; protein N(6)-(lipoyl)lysine from octanoyl-[acyl-carrier-protein]: step 2/2. Its function is as follows. Catalyzes the radical-mediated insertion of two sulfur atoms into the C-6 and C-8 positions of the octanoyl moiety bound to the lipoyl domains of lipoate-dependent enzymes, thereby converting the octanoylated domains into lipoylated derivatives. This Chlorobium phaeobacteroides (strain DSM 266 / SMG 266 / 2430) protein is Lipoyl synthase.